The primary structure comprises 306 residues: MAHHENQTNCNDERGICSLDSDADDQKQKKRKPLEIYTFIDPLCPECWAFEPILKKLQVEYGQYFRIRFIVAGKLEAWNLCRGKYKGAQSREDLAHVWRKITETFGMPCDGDVWLEDPITSSYTPSLAIKAAELQGPQAGVRFLRKLREHLFLNKQNVTKEDILISCAQRAGLDVKEFKQDLHSKGAAKALRCDMQTTKEMDVDLVPTFVFFNDNVDEEGIKVTGHYPYHIYVQILEDMLGFKPERQPPMSLEHFLKKYEFVASIEVAVVFDLEIDEAEKQLKKLVLKQKLELVPMKYGNFWRYLE.

The protein belongs to the SpxH family. Interacts with Spx.

The protein resides in the cytoplasm. In terms of biological role, adapter protein required for efficient degradation of Spx by ClpXP under non-stress conditions. Interaction with Spx stabilizes Spx and exposes the C-terminus of Spx for recognition and proteolysis by ClpXP. The protein is ClpXP adapter protein SpxH of Halalkalibacterium halodurans (strain ATCC BAA-125 / DSM 18197 / FERM 7344 / JCM 9153 / C-125) (Bacillus halodurans).